The following is a 415-amino-acid chain: Histidine--tRNA ligase (415 aa).

The protein belongs to the class-II aminoacyl-tRNA synthetase family. Homodimer.

The protein resides in the cytoplasm. It catalyses the reaction tRNA(His) + L-histidine + ATP = L-histidyl-tRNA(His) + AMP + diphosphate + H(+). This is Histidine--tRNA ligase from Clostridium botulinum (strain ATCC 19397 / Type A).